The primary structure comprises 585 residues: Amyloid protein-binding protein 2 (585 aa).

TPR repeat units lie at residues 50–83 (QGRL…HHCF), 120–153 (IQVG…CTLH), 206–239 (AALY…ITAG), 288–321 (SDTL…RQSV), 333–367 (HEDL…ITHI), 429–462 (AKHY…KEQL), 471–505 (ALSV…GKKL), and 514–547 (EYDY…NRLR).

Component of a CRL2 E3 ubiquitin-protein ligase complex, also named ECS (Elongin BC-CUL2/5-SOCS-box protein) complex, composed of CUL2, Elongin BC (ELOB and ELOC), RBX1 and substrate-specific adapter APPBP2. Interacts with APP; APP interaction inhibits the E3 ubiquitin-protein ligase activity of the CRL2(APPBP2) complex. Post-translationally, rapidly degraded by the proteasome upon overexpression of a C-terminal fragment of APP.

It localises to the nucleus. The protein localises to the cytoplasm. The protein resides in the cytoskeleton. It is found in the membrane. Its pathway is protein modification; protein ubiquitination. With respect to regulation, E3 ubiquitin-protein ligase activity of the CRL2(APPBP2) complex is inhibited by APP. In terms of biological role, substrate-recognition component of a Cul2-RING (CRL2) E3 ubiquitin-protein ligase complex of the DesCEND (destruction via C-end degrons) pathway, which recognizes a C-degron located at the extreme C terminus of target proteins, leading to their ubiquitination and degradation. The C-degron recognized by the DesCEND pathway is usually a motif of less than ten residues and can be present in full-length proteins, truncated proteins or proteolytically cleaved forms. The CRL2(APPBP2) complex specifically recognizes proteins with a -Arg-Xaa-Xaa-Gly degron at the C-terminus, leading to their ubiquitination and degradation. The CRL2(APPBP2) complex mediates ubiquitination and degradation of truncated SELENOV selenoproteins produced by failed UGA/Sec decoding, which end with a -Arg-Xaa-Xaa-Gly degron. May play a role in intracellular protein transport: may be involved in the translocation of APP along microtubules toward the cell surface. This Mus musculus (Mouse) protein is Amyloid protein-binding protein 2.